The primary structure comprises 361 residues: MSTYTIPVGPLHVALEEPMYFRIEVDGEKVVSVDITAGHVHRGIEYLATKRNIYQNIVLTERVCSLCSNSHPQTYCMALESITGMVVPPRAQYLRVIADETKRVASHMFNVAILAHIVGFDSLFMHVMEAREIMQDTKEAVFGNRMDIAAMAIGGVKYDLDKDGRDYFIGQLDKLEPTLRDEIIPLYQTNPSIVDRTRGIGVLSAADCVDYGLMGPVARGSGHAYDVRKQAPYAVYDRLDFEMALGEHGDVWSRAMVRWQEALTSIGLIRQCLRDMPDGPTKAGPVPPIPAGEAVAKTEAPRGELIYYLKTNGTDRPERLKWRVPTYMNWDALNVMMAGARISDIPLIVNSIDPCISCTER.

Ni(2+) is bound by residues Cys64, Cys67, Cys355, and Cys358.

To E.coli formate hydrogenlyase hydrogenase isozyme 3 and to bovine mitochondrial NADH-ubiquinone oxidoreductase. Ni(2+) is required as a cofactor.

In terms of biological role, the carbon monoxide dehydrogenase (CODH) oxidizes carbon monoxide coupled, via CooF, to the reduction of a hydrogen cation by a hydrogenase (probably CooH). The chain is Carbon monoxide-induced hydrogenase (cooH) from Rhodospirillum rubrum.